We begin with the raw amino-acid sequence, 246 residues long: 1-(5-phosphoribosyl)-5-[(5-phosphoribosylamino)methylideneamino] imidazole-4-carboxamide isomerase (246 aa).

The active-site Proton acceptor is the Asp7. Asp129 acts as the Proton donor in catalysis.

Belongs to the HisA/HisF family.

The protein resides in the cytoplasm. The enzyme catalyses 1-(5-phospho-beta-D-ribosyl)-5-[(5-phospho-beta-D-ribosylamino)methylideneamino]imidazole-4-carboxamide = 5-[(5-phospho-1-deoxy-D-ribulos-1-ylimino)methylamino]-1-(5-phospho-beta-D-ribosyl)imidazole-4-carboxamide. It functions in the pathway amino-acid biosynthesis; L-histidine biosynthesis; L-histidine from 5-phospho-alpha-D-ribose 1-diphosphate: step 4/9. This is 1-(5-phosphoribosyl)-5-[(5-phosphoribosylamino)methylideneamino] imidazole-4-carboxamide isomerase from Buchnera aphidicola subsp. Acyrthosiphon pisum (strain 5A).